We begin with the raw amino-acid sequence, 102 residues long: MSQQPEYTDWQQIVDLVKHSVEQKQHDMLLTMLMTPDEREALVSRVNIVRELLKGELSQRQISQMLGVGIATITRGSNELKLKSDEDKARLNQLLEGTKKGG.

The DNA-binding element occupies 59 to 82 (QRQISQMLGVGIATITRGSNELKL).

This sequence belongs to the TrpR family. As to quaternary structure, homodimer.

The protein resides in the cytoplasm. In terms of biological role, this protein is an aporepressor. When complexed with L-tryptophan it binds the operator region of the trp operon and prevents the initiation of transcription. This chain is Trp operon repressor homolog, found in Vibrio vulnificus (strain CMCP6).